Here is a 372-residue protein sequence, read N- to C-terminus: Dual-specificity RNA methyltransferase RlmN (372 aa).

Glu-97 (proton acceptor) is an active-site residue. One can recognise a Radical SAM core domain in the interval 103 to 340; it reads ETDRKTLCVS…AVVRKNRGTD (238 aa). An intrachain disulfide couples Cys-110 to Cys-345. The [4Fe-4S] cluster site is built by Cys-117, Cys-121, and Cys-124. Residues 172–173, Ser-204, 226–228, and Asn-302 contribute to the S-adenosyl-L-methionine site; these read GE and SLN. Cys-345 functions as the S-methylcysteine intermediate in the catalytic mechanism. Residues 350–372 are disordered; that stretch reads AEGGPGDPRRRAAAALTGTPAAG. Residues 362-372 are compositionally biased toward low complexity; that stretch reads AAALTGTPAAG.

It belongs to the radical SAM superfamily. RlmN family. [4Fe-4S] cluster is required as a cofactor.

The protein localises to the cytoplasm. It carries out the reaction adenosine(2503) in 23S rRNA + 2 reduced [2Fe-2S]-[ferredoxin] + 2 S-adenosyl-L-methionine = 2-methyladenosine(2503) in 23S rRNA + 5'-deoxyadenosine + L-methionine + 2 oxidized [2Fe-2S]-[ferredoxin] + S-adenosyl-L-homocysteine. The catalysed reaction is adenosine(37) in tRNA + 2 reduced [2Fe-2S]-[ferredoxin] + 2 S-adenosyl-L-methionine = 2-methyladenosine(37) in tRNA + 5'-deoxyadenosine + L-methionine + 2 oxidized [2Fe-2S]-[ferredoxin] + S-adenosyl-L-homocysteine. Its function is as follows. Specifically methylates position 2 of adenine 2503 in 23S rRNA and position 2 of adenine 37 in tRNAs. m2A2503 modification seems to play a crucial role in the proofreading step occurring at the peptidyl transferase center and thus would serve to optimize ribosomal fidelity. The chain is Dual-specificity RNA methyltransferase RlmN from Anaeromyxobacter dehalogenans (strain 2CP-C).